The following is a 293-amino-acid chain: Pyridoxal 5'-phosphate synthase subunit PdxS (293 aa).

Asp-23 is a D-ribose 5-phosphate binding site. Lys-80 functions as the Schiff-base intermediate with D-ribose 5-phosphate in the catalytic mechanism. Gly-152 provides a ligand contact to D-ribose 5-phosphate. A D-glyceraldehyde 3-phosphate-binding site is contributed by Arg-164. Residues Gly-213 and 234–235 each bind D-ribose 5-phosphate; that span reads GS.

It belongs to the PdxS/SNZ family. In the presence of PdxT, forms a dodecamer of heterodimers.

The catalysed reaction is aldehydo-D-ribose 5-phosphate + D-glyceraldehyde 3-phosphate + L-glutamine = pyridoxal 5'-phosphate + L-glutamate + phosphate + 3 H2O + H(+). Its pathway is cofactor biosynthesis; pyridoxal 5'-phosphate biosynthesis. Functionally, catalyzes the formation of pyridoxal 5'-phosphate from ribose 5-phosphate (RBP), glyceraldehyde 3-phosphate (G3P) and ammonia. The ammonia is provided by the PdxT subunit. Can also use ribulose 5-phosphate and dihydroxyacetone phosphate as substrates, resulting from enzyme-catalyzed isomerization of RBP and G3P, respectively. This is Pyridoxal 5'-phosphate synthase subunit PdxS from Thermus thermophilus (strain ATCC 27634 / DSM 579 / HB8).